We begin with the raw amino-acid sequence, 223 residues long: MMQLVHLFMDEITMDPLHAVYLTVGLFVITFFNPGANLFVVVQTSLASGRRAGVLTGLGVALGDAFYSGLGLFGLATLITQCEEIFSLIRIVGGAYLLWFAWCSMRRQSTPQMSTLQQPISAPWYVFFRRGLITDLSNPQTVLFFISIFSVTLNAETPTWARLMAWAGIVLASIIWRVFLSQAFSLPAVRRAYGRMQRVASRVIGAIIGVFALRLIYEGVTQR.

4 consecutive transmembrane segments (helical) span residues 22-42 (LTVGLFVITFFNPGANLFVVV), 59-79 (GVALGDAFYSGLGLFGLATLI), 85-105 (IFSLIRIVGGAYLLWFAWCSM), and 164-184 (MAWAGIVLASIIWRVFLSQAF).

Belongs to the Rht family.

It is found in the cell membrane. This is an uncharacterized protein from Escherichia coli (strain K12).